The following is a 308-amino-acid chain: 3'(2'),5'-bisphosphate nucleotidase 1 (308 aa).

A2 is subject to N-acetylalanine. D51 (proton acceptor) is an active-site residue. Mg(2+) is bound by residues E74, D117, V119, and D120. T122 (proton acceptor) is an active-site residue. The residue at position 122 (T122) is a Phosphothreonine. Residues T195, H198, G220, and K224 each coordinate AMP. S240 is subject to Phosphoserine. Position 244 is an N6-succinyllysine (K244). D247 contacts Mg(2+).

This sequence belongs to the inositol monophosphatase superfamily. It depends on Mg(2+) as a cofactor. Highly expressed in heart, brain, spleen, lung, liver, skeletal muscle, kidney and testis.

The enzyme catalyses adenosine 3',5'-bisphosphate + H2O = AMP + phosphate. The catalysed reaction is adenosine 2',5'-bisphosphate + H2O = AMP + phosphate. It carries out the reaction 3'-phosphoadenylyl sulfate + H2O = adenosine 5'-phosphosulfate + phosphate. It catalyses the reaction 1D-myo-inositol 1,4-bisphosphate + H2O = 1D-myo-inositol 4-phosphate + phosphate. The enzyme catalyses 1D-myo-inositol 1,3,4-trisphosphate + H2O = 1D-myo-inositol 3,4-bisphosphate + phosphate. Inhibited by Li(+) and Ca(2+), but not by Na(+). Its function is as follows. Phosphatase that converts 3'(2')-phosphoadenosine 5'-phosphate (PAP) to AMP and adenosine 3'-phosphate 5'-phosphosulfate (PAPS) to adenosine 5'-phosphosulfate (APS). Is also able to hydrolyze inositol 1,4-bisphosphate (Ins(1,4)P2) and inositol 1,3,4-trisphosphate (Ins(1,3,4)P3), but is not active on AMP, 3'-AMP, fructose-1,6-bisphosphate, Ins(1)P, Ins(2)P and Ins(1,4,5)P3. Probably prevents the toxic accumulation of PAP, a compound which inhibits a variety of proteins, including PAPS-utilizing enzymes such as sulfotransferases, and RNA processing enzymes. Could also play a role in inositol recycling and phosphoinositide metabolism. In Rattus norvegicus (Rat), this protein is 3'(2'),5'-bisphosphate nucleotidase 1 (Bpnt1).